The following is a 461-amino-acid chain: Cysteine--tRNA ligase (461 aa).

Cysteine 30 provides a ligand contact to Zn(2+). A 'HIGH' region motif is present at residues 32-42 (VTIYDLCHIGH). Zn(2+) contacts are provided by cysteine 211, histidine 236, and glutamate 240. Positions 268-272 (KMSKS) match the 'KMSKS' region motif. Lysine 271 serves as a coordination point for ATP.

The protein belongs to the class-I aminoacyl-tRNA synthetase family. Monomer. Zn(2+) is required as a cofactor.

The protein resides in the cytoplasm. It carries out the reaction tRNA(Cys) + L-cysteine + ATP = L-cysteinyl-tRNA(Cys) + AMP + diphosphate. The sequence is that of Cysteine--tRNA ligase from Shewanella sp. (strain W3-18-1).